The following is a 459-amino-acid chain: tRNA modification GTPase MnmE (459 aa).

Residues Arg29, Glu86, and Lys125 each coordinate (6S)-5-formyl-5,6,7,8-tetrahydrofolate. One can recognise a TrmE-type G domain in the interval 221-382 (GMNVVIAGRP…LTEHLKAVMG (162 aa)). Asn231 lines the K(+) pocket. GTP-binding positions include 231–236 (NAGKSS), 250–256 (TNIEGTT), and 275–278 (DTAG). Residue Ser235 coordinates Mg(2+). Thr250, Ile252, and Thr255 together coordinate K(+). Thr256 contacts Mg(2+). Lys459 lines the (6S)-5-formyl-5,6,7,8-tetrahydrofolate pocket.

This sequence belongs to the TRAFAC class TrmE-Era-EngA-EngB-Septin-like GTPase superfamily. TrmE GTPase family. As to quaternary structure, homodimer. Heterotetramer of two MnmE and two MnmG subunits. Requires K(+) as cofactor.

The protein localises to the cytoplasm. Functionally, exhibits a very high intrinsic GTPase hydrolysis rate. Involved in the addition of a carboxymethylaminomethyl (cmnm) group at the wobble position (U34) of certain tRNAs, forming tRNA-cmnm(5)s(2)U34. The protein is tRNA modification GTPase MnmE of Marinomonas sp. (strain MWYL1).